Consider the following 201-residue polypeptide: dTTP/UTP pyrophosphatase (201 aa).

The Proton acceptor role is filled by Asp-81.

Belongs to the Maf family. YhdE subfamily. The cofactor is a divalent metal cation.

The protein resides in the cytoplasm. It catalyses the reaction dTTP + H2O = dTMP + diphosphate + H(+). The catalysed reaction is UTP + H2O = UMP + diphosphate + H(+). Its function is as follows. Nucleoside triphosphate pyrophosphatase that hydrolyzes dTTP and UTP. May have a dual role in cell division arrest and in preventing the incorporation of modified nucleotides into cellular nucleic acids. The protein is dTTP/UTP pyrophosphatase of Bordetella avium (strain 197N).